Reading from the N-terminus, the 169-residue chain is Ribosome maturation factor RimM (169 aa).

One can recognise a PRC barrel domain in the interval 95-168; it reads EGNYYIFQIV…KMKVELLEGL (74 aa).

This sequence belongs to the RimM family. Binds ribosomal protein uS19.

Its subcellular location is the cytoplasm. An accessory protein needed during the final step in the assembly of 30S ribosomal subunit, possibly for assembly of the head region. Essential for efficient processing of 16S rRNA. May be needed both before and after RbfA during the maturation of 16S rRNA. It has affinity for free ribosomal 30S subunits but not for 70S ribosomes. The polypeptide is Ribosome maturation factor RimM (Desulforamulus reducens (strain ATCC BAA-1160 / DSM 100696 / MI-1) (Desulfotomaculum reducens)).